A 456-amino-acid chain; its full sequence is MLNNAMSVVILAAGKGTRMYSDLPKVLHTLAGKAMVQHVIDAANELGAAHVHLVYGHGGDLLKQALKDDNLNWVLQTEQLGTGHAMQQAAPFFADDEDILMLYGDVPLISVETLQRLRDAKPQGGIGLLTVKLDDPTGYGRITRENGKVTGIVEHKDATDEQRQIQEINTGILIANGADMKRWLAKLTNNNAQGEYYITDIIALAYQEGREIVAVHPQRLSEVEGVNNRLQLSRLERVYQSEQAEKLLLAGVMLRDPARFDLRGTLTHGRDVEIDTNVIIEGNVTLGHRVKIGTGCVIKNSVIGDDCEISPYTVVEDANLAAACTIGPFARLRPGAELLEGAHVGNFVEMKKARLGKGSKAGHLTYLGDAEIGDNVNIGAGTITCNYDGANKFKTIIGDDVFVGSDTQLVAPVTVGKGATIAAGTTVTRNVGENALAISRVPQTQKEGWRRPVKKK.

Positions 1-229 (MLNNAMSVVI…LSEVEGVNNR (229 aa)) are pyrophosphorylase. UDP-N-acetyl-alpha-D-glucosamine-binding positions include 11 to 14 (LAAG), Lys25, Gln76, 81 to 82 (GT), 103 to 105 (YGD), Gly140, Glu154, Asn169, and Asn227. Asp105 serves as a coordination point for Mg(2+). Residue Asn227 participates in Mg(2+) binding. A linker region spans residues 230-250 (LQLSRLERVYQSEQAEKLLLA). Positions 251-456 (GVMLRDPARF…EGWRRPVKKK (206 aa)) are N-acetyltransferase. The UDP-N-acetyl-alpha-D-glucosamine site is built by Arg333 and Lys351. His363 serves as the catalytic Proton acceptor. The UDP-N-acetyl-alpha-D-glucosamine site is built by Tyr366 and Asn377. Acetyl-CoA is bound by residues Ala380, 386 to 387 (NY), Ser405, Ala423, and Arg440.

The protein in the N-terminal section; belongs to the N-acetylglucosamine-1-phosphate uridyltransferase family. In the C-terminal section; belongs to the transferase hexapeptide repeat family. In terms of assembly, homotrimer. Mg(2+) is required as a cofactor.

Its subcellular location is the cytoplasm. The enzyme catalyses alpha-D-glucosamine 1-phosphate + acetyl-CoA = N-acetyl-alpha-D-glucosamine 1-phosphate + CoA + H(+). It catalyses the reaction N-acetyl-alpha-D-glucosamine 1-phosphate + UTP + H(+) = UDP-N-acetyl-alpha-D-glucosamine + diphosphate. It participates in nucleotide-sugar biosynthesis; UDP-N-acetyl-alpha-D-glucosamine biosynthesis; N-acetyl-alpha-D-glucosamine 1-phosphate from alpha-D-glucosamine 6-phosphate (route II): step 2/2. It functions in the pathway nucleotide-sugar biosynthesis; UDP-N-acetyl-alpha-D-glucosamine biosynthesis; UDP-N-acetyl-alpha-D-glucosamine from N-acetyl-alpha-D-glucosamine 1-phosphate: step 1/1. The protein operates within bacterial outer membrane biogenesis; LPS lipid A biosynthesis. Its function is as follows. Catalyzes the last two sequential reactions in the de novo biosynthetic pathway for UDP-N-acetylglucosamine (UDP-GlcNAc). The C-terminal domain catalyzes the transfer of acetyl group from acetyl coenzyme A to glucosamine-1-phosphate (GlcN-1-P) to produce N-acetylglucosamine-1-phosphate (GlcNAc-1-P), which is converted into UDP-GlcNAc by the transfer of uridine 5-monophosphate (from uridine 5-triphosphate), a reaction catalyzed by the N-terminal domain. This chain is Bifunctional protein GlmU, found in Escherichia coli O45:K1 (strain S88 / ExPEC).